The chain runs to 156 residues: Transcription elongation factor GreA (156 aa).

Residues 1-84 (MAKYTISKHR…IEDVMRSTDE (84 aa)) are a coiled coil.

It belongs to the GreA/GreB family.

In terms of biological role, necessary for efficient RNA polymerase transcription elongation past template-encoded arresting sites. The arresting sites in DNA have the property of trapping a certain fraction of elongating RNA polymerases that pass through, resulting in locked ternary complexes. Cleavage of the nascent transcript by cleavage factors such as GreA or GreB allows the resumption of elongation from the new 3'terminus. GreA releases sequences of 2 to 3 nucleotides. The sequence is that of Transcription elongation factor GreA from Ureaplasma urealyticum serovar 10 (strain ATCC 33699 / Western).